We begin with the raw amino-acid sequence, 221 residues long: Deoxyribose-phosphate aldolase (221 aa).

The active-site Proton donor/acceptor is aspartate 91. Lysine 153 serves as the catalytic Schiff-base intermediate with acetaldehyde. Lysine 182 functions as the Proton donor/acceptor in the catalytic mechanism.

Belongs to the DeoC/FbaB aldolase family. DeoC type 1 subfamily.

It is found in the cytoplasm. The catalysed reaction is 2-deoxy-D-ribose 5-phosphate = D-glyceraldehyde 3-phosphate + acetaldehyde. Its pathway is carbohydrate degradation; 2-deoxy-D-ribose 1-phosphate degradation; D-glyceraldehyde 3-phosphate and acetaldehyde from 2-deoxy-alpha-D-ribose 1-phosphate: step 2/2. Catalyzes a reversible aldol reaction between acetaldehyde and D-glyceraldehyde 3-phosphate to generate 2-deoxy-D-ribose 5-phosphate. The protein is Deoxyribose-phosphate aldolase of Clostridium botulinum (strain Eklund 17B / Type B).